The sequence spans 105 residues: Large ribosomal subunit protein bL21 (105 aa).

The protein belongs to the bacterial ribosomal protein bL21 family. In terms of assembly, part of the 50S ribosomal subunit. Contacts protein L20.

This protein binds to 23S rRNA in the presence of protein L20. The chain is Large ribosomal subunit protein bL21 from Rhizobium johnstonii (strain DSM 114642 / LMG 32736 / 3841) (Rhizobium leguminosarum bv. viciae).